The primary structure comprises 340 residues: Phosphoribosylformylglycinamidine cyclo-ligase (340 aa).

This sequence belongs to the AIR synthase family.

The protein resides in the cytoplasm. It catalyses the reaction 2-formamido-N(1)-(5-O-phospho-beta-D-ribosyl)acetamidine + ATP = 5-amino-1-(5-phospho-beta-D-ribosyl)imidazole + ADP + phosphate + H(+). Its pathway is purine metabolism; IMP biosynthesis via de novo pathway; 5-amino-1-(5-phospho-D-ribosyl)imidazole from N(2)-formyl-N(1)-(5-phospho-D-ribosyl)glycinamide: step 2/2. In Streptococcus agalactiae serotype V (strain ATCC BAA-611 / 2603 V/R), this protein is Phosphoribosylformylglycinamidine cyclo-ligase.